We begin with the raw amino-acid sequence, 299 residues long: Coenzyme PQQ synthesis protein B (299 aa).

The protein belongs to the PqqB family.

The protein operates within cofactor biosynthesis; pyrroloquinoline quinone biosynthesis. May be involved in the transport of PQQ or its precursor to the periplasm. The protein is Coenzyme PQQ synthesis protein B of Methylorubrum extorquens (strain PA1) (Methylobacterium extorquens).